Reading from the N-terminus, the 105-residue chain is Large ribosomal subunit protein P2 (105 aa).

Belongs to the eukaryotic ribosomal protein P1/P2 family. As to quaternary structure, P1 and P2 exist as dimers at the large ribosomal subunit. Phosphorylated.

Functionally, plays an important role in the elongation step of protein synthesis. The protein is Large ribosomal subunit protein P2 (LIP2) of Leishmania braziliensis.